Reading from the N-terminus, the 528-residue chain is ATP synthase F(1) complex catalytic subunit beta, mitochondrial (528 aa).

The N-terminal 46 residues, 1 to 46 (MLGLVGRVVAASASGALRGLSPSAPLPQAQLLLRAAPAALQPARDY), are a transit peptide targeting the mitochondrion. Serine 106 carries O-linked (GlcNAc) serine glycosylation. Residues lysine 124 and lysine 161 each carry the N6-acetyllysine; alternate modification. Lysine 124 and lysine 161 each carry N6-succinyllysine; alternate. An N6-acetyllysine modification is found at lysine 198. Glycine 209, valine 210, glycine 211, lysine 212, threonine 213, and valine 214 together coordinate ADP. Glycine 209 contributes to the ATP binding site. Glycine 209, valine 210, glycine 211, lysine 212, and threonine 213 together coordinate phosphate. Residues glycine 211, lysine 212, threonine 213, and valine 214 each contribute to the ATP site. Mg(2+) is bound at residue threonine 213. Mg(2+) is bound at residue glutamate 238. Arginine 239 serves as a coordination point for ATP. N6-acetyllysine; alternate occurs at positions 259 and 264. N6-succinyllysine; alternate is present on residues lysine 259 and lysine 264. At threonine 312 the chain carries Phosphothreonine. Serine 415 is modified (phosphoserine). Lysine 426 carries the post-translational modification N6-acetyllysine. A Phosphoserine modification is found at serine 433. N6-acetyllysine occurs at positions 480 and 485. Lysine 522 carries the N6-acetyllysine; alternate modification. The residue at position 522 (lysine 522) is an N6-succinyllysine; alternate.

It belongs to the ATPase alpha/beta chains family. As to quaternary structure, homotrimer. Component of the ATP synthase complex composed at least of ATP5F1A/subunit alpha, ATP5F1B/subunit beta, ATP5MC1/subunit c (homooctomer), MT-ATP6/subunit a, MT-ATP8/subunit 8, ATP5ME/subunit e, ATP5MF/subunit f, ATP5MG/subunit g, ATP5MK/subunit k, ATP5MJ/subunit j, ATP5F1C/subunit gamma, ATP5F1D/subunit delta, ATP5F1E/subunit epsilon, ATP5PF/subunit F6, ATP5PB/subunit b, ATP5PD/subunit d, ATP5PO/subunit OSCP. ATP synthase complex consists of a soluble F(1) head domain (subunits alpha(3) and beta(3)) - the catalytic core - and a membrane F(0) domain - the membrane proton channel (subunits c, a, 8, e, f, g, k and j). These two domains are linked by a central stalk (subunits gamma, delta, and epsilon) rotating inside the F1 region and a stationary peripheral stalk (subunits F6, b, d, and OSCP). Interacts with PPIF. Interacts with BCL2L1 isoform BCL-X(L); the interaction mediates the association of BCL2L1 isoform BCL-X(L) with the mitochondrial membrane F(1)F(0) ATP synthase and enhances neurons metabolic efficiency. Interacts with CLN5 and PPT1. Interacts with S100A1; this interaction increases F1-ATPase activity. Interacts with MTLN. Interacts with TTC5/STRAP; the interaction results in decreased mitochondrial ATP production.

It localises to the mitochondrion inner membrane. The catalysed reaction is ATP + H2O + 4 H(+)(in) = ADP + phosphate + 5 H(+)(out). Its function is as follows. Catalytic subunit beta, of the mitochondrial membrane ATP synthase complex (F(1)F(0) ATP synthase or Complex V) that produces ATP from ADP in the presence of a proton gradient across the membrane which is generated by electron transport complexes of the respiratory chain. ATP synthase complex consist of a soluble F(1) head domain - the catalytic core - and a membrane F(1) domain - the membrane proton channel. These two domains are linked by a central stalk rotating inside the F(1) region and a stationary peripheral stalk. During catalysis, ATP synthesis in the catalytic domain of F(1) is coupled via a rotary mechanism of the central stalk subunits to proton translocation. In vivo, can only synthesize ATP although its ATP hydrolase activity can be activated artificially in vitro. With the subunit alpha (ATP5F1A), forms the catalytic core in the F(1) domain. The protein is ATP synthase F(1) complex catalytic subunit beta, mitochondrial of Bos taurus (Bovine).